The primary structure comprises 359 residues: Small ribosomal subunit biogenesis GTPase RsgA (359 aa).

Residues 101 to 259 form the CP-type G domain; sequence KRKGSQAIAS…LMDNPGIREV (159 aa). Residues 149 to 152 and 201 to 209 each bind GTP; these read NKKD and GSSGAGKST. Zn(2+) contacts are provided by C284, C289, H291, and C297. A disordered region spans residues 331–359; the sequence is DPEEARKKKQKDKQMSKALQKRLKDKGRK. Positions 349–359 are enriched in basic residues; sequence LQKRLKDKGRK.

Belongs to the TRAFAC class YlqF/YawG GTPase family. RsgA subfamily. As to quaternary structure, monomer. Associates with 30S ribosomal subunit, binds 16S rRNA. The cofactor is Zn(2+).

The protein resides in the cytoplasm. Its function is as follows. One of several proteins that assist in the late maturation steps of the functional core of the 30S ribosomal subunit. Helps release RbfA from mature subunits. May play a role in the assembly of ribosomal proteins into the subunit. Circularly permuted GTPase that catalyzes slow GTP hydrolysis, GTPase activity is stimulated by the 30S ribosomal subunit. The sequence is that of Small ribosomal subunit biogenesis GTPase RsgA from Leptospira interrogans serogroup Icterohaemorrhagiae serovar copenhageni (strain Fiocruz L1-130).